The sequence spans 320 residues: MEEVYKVVEGFYNQFEWEDIAKDLTPYKGIVFCGMGGSGIIGSFASKWLEHRSFNKPTFVVKDYTLPPFVDRDYLVFCISYSGNTEETLSNFEEAIGRGIKPLCITSNGKLMERAKEEGCEIYEVPKGFQPRYSLGFMLSKVLNLLGVDKDELEDAKENLKENLESLKQKGKEIANRIYGYIPVVYSTPLTAHIAERWKGQINENSKSPAYFTILPEMHHNEVMGWSNPELRNKFVYLLMFDEKDHHRVKLRVDITKKILEDFGVVPIMLKGEGNSYLARSLYLVHLADWVSVFLAELYGYDPVPVKTIERIKEELKKHA.

In terms of domain architecture, SIS spans 20–153 (IAKDLTPYKG…NLLGVDKDEL (134 aa)). 6 residues coordinate D-fructose 6-phosphate: Gly-37, Ser-38, Ser-80, Ser-82, Thr-85, and Arg-132. Catalysis depends on Glu-204, which acts as the Proton acceptor. D-fructose 6-phosphate contacts are provided by His-220 and Lys-313. The active-site Proton donor is the His-220. The active-site Proton acceptor is the Lys-313.

It belongs to the PGI/PMI family. In terms of assembly, homodimer.

The enzyme catalyses alpha-D-glucose 6-phosphate = beta-D-fructose 6-phosphate. It catalyses the reaction D-mannose 6-phosphate = D-fructose 6-phosphate. In terms of biological role, dual specificity isomerase that catalyzes the isomerization of both glucose-6-phosphate and mannose-6-phosphate to fructose-6-phosphate. The chain is Bifunctional phosphoglucose/phosphomannose isomerase from Aquifex aeolicus (strain VF5).